Consider the following 359-residue polypeptide: Photosystem II protein D1 3 (359 aa).

Helical transmembrane passes span 29 to 46 (YVGWFGVLMIPTLLAATI), 118 to 133 (HFLIGIYAYMGREWEL), and 142 to 156 (WICVAYSAPVAAASA). His-118 lines the chlorophyll a pocket. Tyr-126 lines the pheophytin a pocket. Positions 170 and 189 each coordinate [CaMn4O5] cluster. A helical transmembrane segment spans residues 197–218 (FHMLGVAGVFGGSLFSAMHGSL). A chlorophyll a-binding site is contributed by His-198. A quinone is bound by residues His-215 and 264–265 (SF). His-215 contacts Fe cation. A Fe cation-binding site is contributed by His-272. The helical transmembrane segment at 274-288 (FLAAWPVVGIWFTAL) threads the bilayer. His-332, Glu-333, Asp-342, and Ala-344 together coordinate [CaMn4O5] cluster. Residues 345–359 (AAESTPVALQVPAIG) constitute a propeptide that is removed on maturation.

The protein belongs to the reaction center PufL/M/PsbA/D family. PSII is composed of 1 copy each of membrane proteins PsbA, PsbB, PsbC, PsbD, PsbE, PsbF, PsbH, PsbI, PsbJ, PsbK, PsbL, PsbM, PsbT, PsbX, PsbY, PsbZ, Psb30/Ycf12, peripheral proteins PsbO, CyanoQ (PsbQ), PsbU, PsbV and a large number of cofactors. It forms dimeric complexes. The D1/D2 heterodimer binds P680, chlorophylls that are the primary electron donor of PSII, and subsequent electron acceptors. It shares a non-heme iron and each subunit binds pheophytin, quinone, additional chlorophylls, carotenoids and lipids. D1 provides most of the ligands for the Mn4-Ca-O5 cluster of the oxygen-evolving complex (OEC). There is also a Cl(-1) ion associated with D1 and D2, which is required for oxygen evolution. The PSII complex binds additional chlorophylls, carotenoids and specific lipids. serves as cofactor. In terms of processing, tyr-161 forms a radical intermediate that is referred to as redox-active TyrZ, YZ or Y-Z. C-terminally processed by CtpA; processing is essential to allow assembly of the oxygen-evolving complex and thus photosynthetic growth.

Its subcellular location is the cellular thylakoid membrane. The catalysed reaction is 2 a plastoquinone + 4 hnu + 2 H2O = 2 a plastoquinol + O2. Photosystem II (PSII) is a light-driven water:plastoquinone oxidoreductase that uses light energy to abstract electrons from H(2)O, generating O(2) and a proton gradient subsequently used for ATP formation. It consists of a core antenna complex that captures photons, and an electron transfer chain that converts photonic excitation into a charge separation. The D1/D2 (PsbA/PsbD) reaction center heterodimer binds P680, the primary electron donor of PSII as well as several subsequent electron acceptors. This is Photosystem II protein D1 3 from Parasynechococcus marenigrum (strain WH8102).